Here is a 538-residue protein sequence, read N- to C-terminus: Bifunctional purine biosynthesis protein PurH (538 aa).

The region spanning 8–158 (IPAPDKVEIK…KNHAYVTTLT (151 aa)) is the MGS-like domain.

The protein belongs to the PurH family.

It catalyses the reaction (6R)-10-formyltetrahydrofolate + 5-amino-1-(5-phospho-beta-D-ribosyl)imidazole-4-carboxamide = 5-formamido-1-(5-phospho-D-ribosyl)imidazole-4-carboxamide + (6S)-5,6,7,8-tetrahydrofolate. The catalysed reaction is IMP + H2O = 5-formamido-1-(5-phospho-D-ribosyl)imidazole-4-carboxamide. Its pathway is purine metabolism; IMP biosynthesis via de novo pathway; 5-formamido-1-(5-phospho-D-ribosyl)imidazole-4-carboxamide from 5-amino-1-(5-phospho-D-ribosyl)imidazole-4-carboxamide (10-formyl THF route): step 1/1. It functions in the pathway purine metabolism; IMP biosynthesis via de novo pathway; IMP from 5-formamido-1-(5-phospho-D-ribosyl)imidazole-4-carboxamide: step 1/1. This chain is Bifunctional purine biosynthesis protein PurH, found in Rhizobium johnstonii (strain DSM 114642 / LMG 32736 / 3841) (Rhizobium leguminosarum bv. viciae).